The sequence spans 135 residues: Bacilliredoxin CHU_0972 (135 aa).

Belongs to the bacilliredoxin family.

This Cytophaga hutchinsonii (strain ATCC 33406 / DSM 1761 / CIP 103989 / NBRC 15051 / NCIMB 9469 / D465) protein is Bacilliredoxin CHU_0972.